The chain runs to 141 residues: MAIERTLSIIKPDAVAKNVIGQIYARFEAAGLKIAAARMAHLSRQEAEQFYAVHKERPFFKDLVDFMISGPVMIQVLEGENAILKNRELMGATDPKKAAPGTIRADFADSIDANAVHGSDAAETAQVEVSFFFPGLNIYAR.

ATP is bound by residues Lys11, Phe59, Arg87, Thr93, Arg104, and Asn114. The active-site Pros-phosphohistidine intermediate is the His117.

This sequence belongs to the NDK family. Homotetramer. It depends on Mg(2+) as a cofactor.

It is found in the cytoplasm. It catalyses the reaction a 2'-deoxyribonucleoside 5'-diphosphate + ATP = a 2'-deoxyribonucleoside 5'-triphosphate + ADP. It carries out the reaction a ribonucleoside 5'-diphosphate + ATP = a ribonucleoside 5'-triphosphate + ADP. Major role in the synthesis of nucleoside triphosphates other than ATP. The ATP gamma phosphate is transferred to the NDP beta phosphate via a ping-pong mechanism, using a phosphorylated active-site intermediate. The chain is Nucleoside diphosphate kinase from Paracidovorax citrulli (strain AAC00-1) (Acidovorax citrulli).